The primary structure comprises 507 residues: Histidine ammonia-lyase (507 aa).

The segment at residues 142 to 144 (ASG) is a cross-link (5-imidazolinone (Ala-Gly)). Serine 143 carries the post-translational modification 2,3-didehydroalanine (Ser).

Belongs to the PAL/histidase family. Post-translationally, contains an active site 4-methylidene-imidazol-5-one (MIO), which is formed autocatalytically by cyclization and dehydration of residues Ala-Ser-Gly.

The protein resides in the cytoplasm. The enzyme catalyses L-histidine = trans-urocanate + NH4(+). It functions in the pathway amino-acid degradation; L-histidine degradation into L-glutamate; N-formimidoyl-L-glutamate from L-histidine: step 1/3. The protein is Histidine ammonia-lyase of Maricaulis maris (strain MCS10) (Caulobacter maris).